The primary structure comprises 334 residues: Thiamine-binding periplasmic protein (334 aa).

The signal sequence occupies residues 1–23 (MRLLSLLTFSLFAVIGLAPAAQA). Thiamine is bound by residues 64 to 65 (DG), 166 to 167 (AT), Trp-202, and 220 to 223 (YTTS).

The protein belongs to the bacterial solute-binding protein 1 family. The complex is composed of two ATP-binding proteins (ThiQ), two transmembrane proteins (ThiP) and a solute-binding protein (ThiB).

The protein resides in the periplasm. Its function is as follows. Part of the ABC transporter complex ThiBPQ involved in thiamine import. The protein is Thiamine-binding periplasmic protein (thiB) of Brucella suis biovar 1 (strain 1330).